The chain runs to 101 residues: Protein mes1 (101 aa).

The segment covering 1-19 (MVNTDNKENEPPNMEKAHM) has biased composition (basic and acidic residues). Positions 1 to 101 (MVNTDNKENE…RSPNPLLSMR (101 aa)) are disordered.

As to quaternary structure, interacts with slp1.

It is found in the cytoplasm. Its subcellular location is the nucleus. Functionally, specifically required for meiosis II (MII). Binds to slp1, an activator of the anapahase promoting complex/cyclcosome (APC/C), and counteracts its function in promoting proteolysis of cdc13. By suppressing the degradation of cdc13 at anaphase I this protein may help maintain a sufficient level of cdc2 kinase activity to complete MII. In Schizosaccharomyces pombe (strain 972 / ATCC 24843) (Fission yeast), this protein is Protein mes1 (mes1).